We begin with the raw amino-acid sequence, 226 residues long: Leucyl/phenylalanyl-tRNA--protein transferase (226 aa).

The protein belongs to the L/F-transferase family.

Its subcellular location is the cytoplasm. The enzyme catalyses N-terminal L-lysyl-[protein] + L-leucyl-tRNA(Leu) = N-terminal L-leucyl-L-lysyl-[protein] + tRNA(Leu) + H(+). The catalysed reaction is N-terminal L-arginyl-[protein] + L-leucyl-tRNA(Leu) = N-terminal L-leucyl-L-arginyl-[protein] + tRNA(Leu) + H(+). It catalyses the reaction L-phenylalanyl-tRNA(Phe) + an N-terminal L-alpha-aminoacyl-[protein] = an N-terminal L-phenylalanyl-L-alpha-aminoacyl-[protein] + tRNA(Phe). In terms of biological role, functions in the N-end rule pathway of protein degradation where it conjugates Leu, Phe and, less efficiently, Met from aminoacyl-tRNAs to the N-termini of proteins containing an N-terminal arginine or lysine. This chain is Leucyl/phenylalanyl-tRNA--protein transferase, found in Pseudomonas fluorescens (strain ATCC BAA-477 / NRRL B-23932 / Pf-5).